The following is a 351-amino-acid chain: Formyl peptide receptor 2 (351 aa).

Topologically, residues 1-29 (MESNYSIHLNGSEVVVYDSTISRVLWILS) are extracellular. N-linked (GlcNAc...) asparagine glycosylation is found at Asn-4 and Asn-10. The helical transmembrane segment at 30 to 50 (MVVVSITFFLGVLGNGLVIWV) threads the bilayer. Residues 51 to 61 (AGFRMPHTVTT) are Cytoplasmic-facing. A helical transmembrane segment spans residues 62–82 (IWYLNLALADFSFTATLPFLL). Residues 83–99 (VEMAMKEKWPFGWFLCK) lie on the Extracellular side of the membrane. Cysteines 98 and 176 form a disulfide. The chain crosses the membrane as a helical span at residues 100–120 (LVHIVVDVNLFGSVFLIALIA). The Cytoplasmic segment spans residues 121–144 (LDRCICVLHPVWAQNHRTVSLARK). The helical transmembrane segment at 145–165 (VVVGPWIFALILTLPIFIFLT) threads the bilayer. The Extracellular segment spans residues 166-205 (TVRIPGGDVYCTFNFGSWAQTDEEKLNTAITFVTTRGIIR). A helical membrane pass occupies residues 206 to 226 (FLIGFSMPMSIVAVCYGLIAV). The Cytoplasmic portion of the chain corresponds to 227 to 241 (KINRRNLVNSSRPLR). The chain crosses the membrane as a helical span at residues 242-262 (VLTAVVASFFICWFPFQLVAL). Over 263–282 (LGTVWFKETLLSGSYKILDM) the chain is Extracellular. A helical membrane pass occupies residues 283–305 (FVNPTSSLAYFNSCLNPMLYVFM). The Cytoplasmic segment spans residues 306-351 (GQDFRERFIHSLPYSLERALSEDSGQTSDSSTSSTSPPADIELKAP). Residues 325 to 351 (LSEDSGQTSDSSTSSTSPPADIELKAP) form a disordered region. Over residues 327–341 (EDSGQTSDSSTSSTS) the composition is skewed to low complexity.

The protein belongs to the G-protein coupled receptor 1 family. Interacts with Amyloid-beta protein 42, product of APP; the interaction takes place at the cell surface and the complex is then rapidly internalized. As to expression, primarily expressed in neutrophils. Not detected in vomeronasal neurons.

Its subcellular location is the cell membrane. Functionally, high affinity receptor for N-formyl-methionyl peptides (FMLP), which are powerful neutrophil chemotactic factors. Stimulates chemotaxis in immune cells to site of infection or tissue damage upon recognition of several ligands, such as FMLP, or ligand involved in cell damage, disease or inflammation. Receptor for the chemokine-like protein FAM19A5, mediating FAM19A5-stimulated macrophage chemotaxis and the inhibitory effect on TNFSF11/RANKL-induced osteoclast differentiation. In Mus musculus (Mouse), this protein is Formyl peptide receptor 2 (Fpr2).